We begin with the raw amino-acid sequence, 446 residues long: Na(+)-translocating NADH-quinone reductase subunit A (446 aa).

It belongs to the NqrA family. Composed of six subunits; NqrA, NqrB, NqrC, NqrD, NqrE and NqrF.

It carries out the reaction a ubiquinone + n Na(+)(in) + NADH + H(+) = a ubiquinol + n Na(+)(out) + NAD(+). This reaction is tightly coupled to the Na(+) pumping activity and specifically requires Na(+) for activity. Inhibited by korormicin and 2-N-heptyl-4-hydroxyquinoline N-oxide (HQNO). Its function is as follows. NQR complex catalyzes the reduction of ubiquinone-1 to ubiquinol by two successive reactions, coupled with the transport of Na(+) ions from the cytoplasm to the periplasm. NqrA to NqrE are probably involved in the second step, the conversion of ubisemiquinone to ubiquinol. This chain is Na(+)-translocating NADH-quinone reductase subunit A, found in Vibrio alginolyticus.